We begin with the raw amino-acid sequence, 986 residues long: MARKIGSVRIEVLEGRNLVPMDSNGMSDPYGVVIVGDKKKKTKAIKHTLFPKWESDNCFEFDIDVNLLAITVEVYDWDRFSSDDRMGLTNIPVSQIQEYIVDTTKWYTLQPMKPNDKVSGEIKLKIRFDKDKTLPPPEKSPFIKAIKDNDTQAIELMMNKAKLDYTICDNEGTPAIHIAAASNNIPLITMLLKGSDARVSIRDQHGNTPLHLFVQKNVSLNCEDIINKLIERGCGINDENNLGETALHKACLATVVQKTTIVEQLLQKGAIINHQTKTRDTPLHYAIKVGKVEFVRFFLQNGANVMIEGGKPSRTPLELAKELGNPQIISKVEKVIEISDWLNELQLETLIPKFIKNEIYMDVITDINEGTLDLLNISVSGQRTKLLRAVRKIKDPLSLSSNSSLRSNSLIHVENDNNNNNNNNNNNNNSQEQCNINNDSLGSGNRNSGGFKAQNQNNTLNNNNVESKSTGNLNSLKNIHNVNNDNNEDKKNNILSPNPIPASSSAPAAPSPVAIGSNTTTTTTTAIAATTTTLTTTATTEDKTTTESTTPPQQQQQTTTITPTKTTTVTPEGPNLDVSDLSVLKHINLDSDSWVIDEKTLTYNVLLGTGASGKVYKGTFNGQEVAIKVLKSFTDKKDIAEFKKEFQIVSALRAPGVVYFHGAGIKDKLCIVMEYCSRGSLYHILKDDTTQFTWDNFFNLGTQAINSLDSLHNWTPQVLHRDLKSLNLLVTENWTVKICDFGLSRFDTGSNLETLGKLRGTYAYVAPEVYFGKKYTTKSDVYSMGIILWEMTYRCIKGTHLLPYAEYPHLKFDYQILISSAKKDVRPTTPENAPESLKNLIARTLVKDSTLRPTTLEFYEELLKIRDEYNANREQWDSIRTIPPQQLPKPIINEEIIPSIDSNNINNNNNNNNTTVTSEKPKLRYQPSNSNLLNNNNNNNNNDSDNNISEPATTDSITKPISKVKEQLLTRTRSSSSPMEPKSIKK.

Positions 1–107 (MARKIGSVRI…EYIVDTTKWY (107 aa)) constitute a C2 domain. Residues D22, D28, D76, D78, S81, and D84 each coordinate Ca(2+). ANK repeat units follow at residues 137–167 (PEKSPFIKAIKDNDTQAIELMMNKAKLDYTI), 171–201 (EGTPAIHIAAASNNIPLITMLLKGSDARVSI), 205–238 (HGNTPLHLFVQKNVSLNCEDIINKLIERGCGIND), 242–274 (LGETALHKACLATVVQKTTIVEQLLQKGAIINH), 278–307 (TRDTPLHYAIKVGKVEFVRFFLQNGANVMI), and 312–344 (PSRTPLELAKELGNPQIISKVEKVIEISDWLNE). An SAM domain is found at 333–396 (EKVIEISDWL…LRAVRKIKDP (64 aa)). Residues 412-438 (HVENDNNNNNNNNNNNNNSQEQCNINN) are compositionally biased toward low complexity. 2 disordered regions span residues 412–520 (HVEN…SNTT) and 532–574 (TTLT…PEGP). Residues 439–448 (DSLGSGNRNS) are compositionally biased toward polar residues. Residues 454–464 (QNQNNTLNNNN) show a composition bias toward low complexity. A compositionally biased stretch (polar residues) spans 465–476 (VESKSTGNLNSL). Low complexity-rich tracts occupy residues 493–520 (NILSPNPIPASSSAPAAPSPVAIGSNTT) and 546–571 (TESTTPPQQQQQTTTITPTKTTTVTP). The Protein kinase domain maps to 601-870 (LTYNVLLGTG…ELLKIRDEYN (270 aa)). ATP-binding positions include 607–615 (LGTGASGKV) and K628. The Proton acceptor role is filled by D722. Composition is skewed to low complexity over residues 901-913 (DSNNINNNNNNNN) and 928-947 (SNSNLLNNNNNNNNNDSDNN). Residues 901 to 986 (DSNNINNNNN…SPMEPKSIKK (86 aa)) are disordered. 2 stretches are compositionally biased toward polar residues: residues 948-959 (ISEPATTDSITK) and 969-978 (LTRTRSSSSP).

This sequence belongs to the protein kinase superfamily. TKL Ser/Thr protein kinase family. It depends on Ca(2+) as a cofactor.

The catalysed reaction is L-seryl-[protein] + ATP = O-phospho-L-seryl-[protein] + ADP + H(+). It catalyses the reaction L-threonyl-[protein] + ATP = O-phospho-L-threonyl-[protein] + ADP + H(+). In Dictyostelium discoideum (Social amoeba), this protein is Probable serine/threonine-protein kinase DDB_G0272092.